We begin with the raw amino-acid sequence, 4043 residues long: MGSFQNSSEPIAIIGTGCRFPGGCDSPSKLWELLRAPRDLLKEIPESRFSVDSFYHPDNAHHGTSNVRHSYFLEEDLRQFDVQFFGIKPIEANAVDPQQRLLLETVYEGLESAGLSIQRLQGSDTAVYVGVMSADFTDLVGRDTETFPTYFATGTARSILSNRLSYFFDWHGPSLTIDTACSSSLIAMHHAVQTLRSGDSSLAIVAGSNLILGPEQYIAESKLQMLSPTGRSRMWDAAADGYARGEGVAAIVLKRLSQAIADGDHIECVIRETGVNQDGKTPGITMPSATAQAALIRSTYAKAGLDLSNRSDRPQYFEAHGTGTPAGDPIEARAIQTAFFGPDLNFTADSRKDTLFVGSIKTVVGHTEGTAGLAAVIKASLALQSGTIPPNRLLEQLNPAIKPFYNSLKILAAAEDWPQLSRGGVRRVSVNSFGFGGANSHAILESYEPSLHSHKGTRDISFSPFTFSAASETALVASLRAYRDLLSTRSDVRLTDLAWTLNSRRSTLASRVAIAASDKDDLVLKLDDRAENYDGSDTFMDAGHRKPNANELRILGVFTGQGAQWARMGAELIEQCPGASKVVDALEQSLRSLPPQDRPTWSLREQLLAPPSSSMVSTASISQPLCTAIQIMLVDMLREAGIQFSAVVGHSSGEIGAAYAAGCLSAKDAIRVAYYRGVHLKSALQKGSMLAVGTTFEDAQDLCNLPTFEDRLCVAASNSPSSVTISGDSDAIEEIKVVFDEEKKFTRLLKVDRAYHSHHMQDCVEPYVRSLRQCSVTFRPPNRNQCVWISSVFVQDIHQLSEDGSDRYWGSNLARPVMFAEALQLLLSLEGSFDLAVEVGPHPALKGPASQTIQDALGYSIPYTGVLSRGNSDVEAFAAALGSIWTAFGDGAVDFSRLQKFTSGSAAQPQLLKGLPTYQWDHNRVFWHESRVSKAFRTRKDVPNELLGRQVLDGAPNQLRWRNILRPREIAWLEGHQVQGQMVFPCAGYVSACAEASMRLAVGQNVESIELEEFVVGQAIVFNDSNSEVETLATLTEVVHRQQTISANFAFYSCPTGGESLELVRNASCRLRITVGDSAVDLLQPQAEADFALLEVESDRFYNALGQLGFGYTGPFRSLTALKRKLGIARGLIENAPPSFNHSQPLLIHPATLDAAIQSIMLAYCYPGDSMLRAIHLPTGIEKLTLNPVNCLKFAGQSVQVPFDSSASTGSGRSLQGDVSIYSLDGSRAVQLEGLQTQPLSSPTEASDLNIFTELVWGVDRPDCEEILRTTVVEDFDAELLFSLERVAYFYLRSLGEAVPERERNGLEWHHKRLFAYVDHVLSRVARGVNRFARPEWAADSKNDILKILQKYPDNIDLRLMRAVGENLPAVVRGQLTMLEPMIQDNMLNDFYVIAHGMPRYTKYLAAMASQISHRYPHMNVLEIGAGTGGATKSFLKELGEGFSTYTFTDISSGFFEKASQVFASYSAKMNFKVLDIEKDIESQGFAPESFDLIIASLVLHATRDLAQTVRNVRRLLKPGGYLLLLEITENEQMRFGLIFGGLPGWWLGYEDGRPFSPCVDIEEWSRVLEQNGFSGIETAIPHHDTLPAPLSVIVSQAVNEKVQFLHNPLDSIRGSTVIPRLTIIGGGGRRSAQLIDAVSSLVQPQCGQLRVVDSLQKICSEVLPVGGSVLSLTDFDEPVFKSMDADKLRGFQEIFKQSKNVLWVTQGSRSGDPYARMVVGFGRTIVLEMLHLRLQFLDVSPSSSPDASAIAEAMLRLEVSGSWEDEGAEDGAVLHSVEPELSISDGRCWVPRFKPNKEQNERYNSVRRSIETEQSFSDTCVELVYRDNSLSLLEVTHSSSEPLAEPSTKYLELDVNYSVSKAVEVVPGCYLFLILGRDTDTGDRFIALSPKQSSRVRIPRALVLPQHTSHGTINENSLDAFFHEIVARSILRDVPYGSAAIALQPNSLLADALREAAQDKGVTLHLWSTQASDLESEWTYIHRKASKTEVQNAIPRNVTCFFDMGGDESIATKILACLPDHTQAKKEASITAHEAHLIPTVLPDIRSLLMDIGRAMRTRGKSSSPDLRIVDLTDIVKGQADSETSIINWLESSSRVPVAVEPIEARVQFRSDRTYWLVGLTGGLGLSLCEWMAQQGARYIVLSSRSPKVDGRWLAKMNRMGVTVEVVANDISNRDSVQRVYNKIRTELPPISGVAQGAMVLHDTMFLDLDMERMNKVLRPKVDGSTYLEEIFHDTELEFFVFFSSMAAVTGNPGQSAYAAANMFMASLANQRRQRGLNASAVHIGAIFGNGYVTRELTLVQQEFLRKVGNLWLSEHDFRRLFAEAVYAGRHHRGRSPELSTGLKILESDESESITWFNNPVFQHCIKQSGRVDLISETSTSAAPVKVRLAEASSSADIYDIISDAFVTKLKTSLQVEGDRPIVDLTADTLGIDSLVAVDIRSWFIKELQVEIPVLKILSGATVGEMVTQAQELLPKELTPNLDPNAEAKPSKPKNTVQPKQQTKKTIQLQNVAKAPQPALSQQVSSGVQNMIKTNPPKEAEAKQPRPEVKQAAPKDSQYPTALETPSKLQDPSRNIVVAKDLAAEEKHLTDQEPVPSNMSSSSWSEIDESEGKVETSSSSSSTSASQIITKTKPVEVKKSVPMAFGQSRFWFLRHYLEDPSSFNITVSIQLDGPLKIDHFARAVQVVGQRHEALRTRFVTDEAQGTTKQEVLALSNLTLEERTISTDEEAEGVYQELKGYAFDLEKGENIRIILLKRSNRSFTLIIAYHHINMDGVSLEVLLRDLQMAYDSKFLSPRILQYADFSEQQRRDYQSGKWAEDLAFWKKEFQTMPGPLPLLSMARTSTRSPLTAYKTHSAEFHIDPATLDTIQSTCQRMKVTPFHFHLAVFYTMLIRLVDVENLCIGISSANRSQQDTLQSVGLYLNLLPLNFTPQLDQTFTNVLHIVREKSVQAFAHSKVPFDVIVNELGAARSATHSPLFQVLVNYRAGVSERRSFCNCDSKVLTFEQGQTPYDLSLDVIDNPGGDCHVIMAGQSVLYGAEHVAVLRGVYQNLLVAFSRNPALRLNVPPLYDTDEVKHAIKLGHGPAYNYQWPATIPERIDEIVERYPTHVALIDGDGRKMSYTEMARRVNTLAVVLLRQDIGQGSKVGVFMEPGSSWICSLLAILRLDAIYIPLDSRMGLDRLSTIVRDCKPDLLLVDNTTLSNVALLGLSCPTLNVDVVSPGSDQQHVPNTAQPSSTAVIMYTSGSTGVPKGIVMQHHTFRNNIETSTEKWDFREGRETTLQQSSYSFDMSLSQTFLTLSNGGTLRIVPKKLRGDPKAIASLITAEGITFTETTPSEYISWLRYGDVDDLRKSKWRIAVSGGETITTNLTGLLRQLEKSDLRLIDCYGPTEITFCSHGREVQYDGEGDILSPAFRTWPNYSVYIVDSHMKPVPIGIPGEILIGGAGVVAGYVHSELDARGFARNNFMNTMFLENAWTRLHRTGDFGRLDQEGNLILGGRIAGDTQVKLRGIRIDLQEIESAILSSGDGKIVDAAVTVRESADSGSEYLMAFVTTLDAGDLSLERIRQELPLPQHMRPANIITLDQLPMTASNKVDRLALKSLPLPPGSHVADTGTDESPSMAKMRDVWATVIPQEVLAHFELGPASNFFQVGGDSMLLVRLQTEINKVFGTSISLFQLFDASSLTGMVSLIDHSESTSQRSEVDWETETTISPSLLQVPATKRFFAHPAVVVLTGATGFLGRAIVNRLLKDCSVQKIHCVAVRRDPSSLPDDFKSPKVVLHRGDLTLPQLGLTDRAATEIFAEADAVIHNGADVSFMKTYQSLKQANLEATKELVRLSAPHRLSFHYISSASVTRLAGQESFDQSSVSAFPPSAEDGYVASKWASERYLEKVSDQCGLPIWIHRPSSIVGEGAPDTDMMASLLGYSRTLRAIPQTDGWTGWLDFVSADRVAMQIADEVYEDYSWPGTVKYLYEAGDREIPLSDLRGVLERETGESFESIPLEEWVLRAEGQGLHPLLGEYLRRVSGIPLVLPRLVQQGSFF.

In terms of domain architecture, Ketosynthase family 3 (KS3) spans 8 to 446 (SEPIAIIGTG…GANSHAILES (439 aa)). Catalysis depends on for beta-ketoacyl synthase activity residues cysteine 181, histidine 320, and histidine 366. An acyl transferase region spans residues 557 to 877 (VFTGQGAQWA…SRGNSDVEAF (321 aa)). The interval 944-1078 (NELLGRQVLD…CRLRITVGDS (135 aa)) is N-terminal hotdog fold. In terms of domain architecture, PKS/mFAS DH spans 944 to 1246 (NELLGRQVLD…TQPLSSPTEA (303 aa)). The dehydratase (DH) domain stretch occupies residues 945-1243 (ELLGRQVLDG…GLQTQPLSSP (299 aa)). Histidine 976 functions as the Proton acceptor; for dehydratase activity in the catalytic mechanism. The tract at residues 1093–1246 (LLEVESDRFY…TQPLSSPTEA (154 aa)) is C-terminal hotdog fold. Aspartate 1154 serves as the catalytic Proton donor; for dehydratase activity. Residues 1400 to 1585 (RYTKYLAAMA…GIETAIPHHD (186 aa)) are methyltransferase (MT) domain. The segment at 2115 to 2288 (TYWLVGLTGG…NASAVHIGAI (174 aa)) is ketoreductase (KR)domain. The Carrier 1 domain occupies 2394–2475 (SSSADIYDII…EMVTQAQELL (82 aa)). Positions 2395 to 2472 (SSADIYDIIS…TVGEMVTQAQ (78 aa)) are peptidyl carrier protein. O-(pantetheine 4'-phosphoryl)serine is present on serine 2435. Disordered stretches follow at residues 2476–2575 (PKEL…DPSR) and 2587–2630 (EKHL…SQII). 2 stretches are compositionally biased toward polar residues: residues 2494-2512 (PKNT…QLQN) and 2520-2534 (ALSQ…NMIK). The span at 2537-2550 (PPKEAEAKQPRPEV) shows a compositional bias: basic and acidic residues. Residues 2617–2627 (TSSSSSSTSAS) show a composition bias toward low complexity. Residues 2640 to 3069 (KSVPMAFGQS…NPALRLNVPP (430 aa)) are condensation. Positions 3102-3502 (EIVERYPTHV…EGNLILGGRI (401 aa)) are adenylation. The Carrier 2 domain maps to 3617–3697 (TDESPSMAKM…GMVSLIDHSE (81 aa)). Residues 3622 to 3694 (SMAKMRDVWA…SLTGMVSLID (73 aa)) form a thiolation region. Serine 3657 is modified (O-(pantetheine 4'-phosphoryl)serine). Residues 3735-3954 (LTGATGFLGR…DFVSADRVAM (220 aa)) form a reductase-like region.

In the C-terminal section; belongs to the NRP synthetase family.

It functions in the pathway mycotoxin biosynthesis. Its function is as follows. Hybrid PKS-NRPS synthetase; part of the gene cluster that mediates the biosynthesis of the mycotoxins cytochalasins E and K. The hybrid PKS-NRPS synthetase ccsA and the enoyl reductase ccsC are responsible for fusion of phenylalanine with an octaketide backbone and subsequent release of the stable tetramic acid precursor. The polyketide synthase module (PKS) of the PKS-NRPS ccsA is responsible for the synthesis of the octaketide backbone. The downstream nonribosomal peptide synthetase (NRPS) amidates the carboxyl end of the octaketide with a phenylalanine. A reductase-like domain (R) at the C-terminus catalyzes the reductive release of the polyketide-amino acid intermediate. Because ccsA lacks a designated enoylreductase (ER) domain, the required activity is provided the enoyl reductase ccsC. Upon formation of the 11-membered carbocycle-fused perhydroisoindolone intermediate, a number of oxidative steps are required to afford the final cytochalasin E and K, including two hydroxylations at C17 and C18, one alcohol oxidation at C17, one epoxidation at C6 and C7 and two Baeyer-Villiger oxidations. The oxidative modification at C17, C18 and the C6-C7 epoxidation are likely to be catalyzed by the two cytochrome P450 oxygenases ccsD and ccsG. CcsD may be responsible for the epoxidation of the C6-C7 double bond. CcsG may be responsible for the successive oxidative modifications at C17 and C18. The double Baeyer-Villiger oxidations of ketocytochalasin to precytochalasin and cytochalasin Z(16) are among the final steps leading to cytochalasin E and K and are catalyzed by ccsB. The first oxygen insertion step follows that of the classic BVMO mechanism, generating the ester precytochalasin. Release of precytochalasin into an aqueous environment can generate the shunt product iso-precytochalasin through spontaneous isomerization. Alternatively, precytochalasin can undergo further oxidation by ccsB to yield the in-line carbonate-containing cytochalasin Z(16). Cytochalasin Z(16) is a precursor to cytochalasin E and cytochalasin K, whereas iso-precytochalasin is a precursor to cytochalasin Z(17) and rosellichalasin. The hydrolyase ccsE may catalyze hydrolysis of epoxide bond in cytochalasin E to afford cytochalasin K. The function of ccsF has not been assigned but it may play a role in post-PKS-NRPS biosynthetic step, resistance or transport of cytochalasins and related PKS-NRPS products. In Aspergillus clavatus (strain ATCC 1007 / CBS 513.65 / DSM 816 / NCTC 3887 / NRRL 1 / QM 1276 / 107), this protein is Polyketide synthase-nonribosomal peptide synthetase.